Here is a 172-residue protein sequence, read N- to C-terminus: Adenine phosphoribosyltransferase (172 aa).

This sequence belongs to the purine/pyrimidine phosphoribosyltransferase family. As to quaternary structure, homodimer.

Its subcellular location is the cytoplasm. It catalyses the reaction AMP + diphosphate = 5-phospho-alpha-D-ribose 1-diphosphate + adenine. It participates in purine metabolism; AMP biosynthesis via salvage pathway; AMP from adenine: step 1/1. In terms of biological role, catalyzes a salvage reaction resulting in the formation of AMP, that is energically less costly than de novo synthesis. The sequence is that of Adenine phosphoribosyltransferase from Methanococcus maripaludis (strain C7 / ATCC BAA-1331).